We begin with the raw amino-acid sequence, 476 residues long: Vitamin D-binding protein (476 aa).

Residues 1 to 16 (MKRVLVLLLALAFGHA) form the signal peptide. Albumin domains lie at 17–208 (LERG…QMKH), 209–394 (LSLL…LLKR), and 395–476 (QLTS…TLQS). Cystine bridges form between cysteine 29–cysteine 75, cysteine 74–cysteine 83, cysteine 96–cysteine 112, cysteine 111–cysteine 122, cysteine 145–cysteine 190, cysteine 189–cysteine 198, cysteine 220–cysteine 266, cysteine 265–cysteine 273, cysteine 286–cysteine 300, cysteine 299–cysteine 311, cysteine 335–cysteine 376, cysteine 375–cysteine 384, cysteine 407–cysteine 453, and cysteine 452–cysteine 462. N-linked (GlcNAc...) asparagine glycosylation is present at asparagine 288. Serine 434 carries the post-translational modification Phosphoserine.

This sequence belongs to the ALB/AFP/VDB family. Associates with membrane-bound immunoglobulin on the surface of B-lymphocytes and with IgG Fc receptor on the membranes of T-lymphocytes. Interacts with LRP2; the interaction is required for renal uptake of GC in complex with 25-hydroxyvitamin D3.

The protein resides in the secreted. Involved in vitamin D transport and storage, scavenging of extracellular G-actin, enhancement of the chemotactic activity of C5 alpha for neutrophils in inflammation and macrophage activation. The protein is Vitamin D-binding protein (Gc) of Mus musculus (Mouse).